We begin with the raw amino-acid sequence, 308 residues long: Probable GTP 3',8-cyclase (308 aa).

Residues 4-224 (RFGRPLEDLR…QIRKKHFRPR (221 aa)) enclose the Radical SAM core domain. A GTP-binding site is contributed by Arg13. [4Fe-4S] cluster is bound by residues Cys20, Cys24, and Cys27. Lys60 provides a ligand contact to GTP. S-adenosyl-L-methionine is bound at residue Gly64. Residue Thr90 participates in GTP binding. Ser114 is a binding site for S-adenosyl-L-methionine. Position 151 (Lys151) interacts with GTP. [4Fe-4S] cluster contacts are provided by Cys245 and Cys248. Residue 250 to 252 (RIR) participates in GTP binding. [4Fe-4S] cluster is bound at residue Cys262.

The protein belongs to the radical SAM superfamily. MoaA family. Requires [4Fe-4S] cluster as cofactor.

The catalysed reaction is GTP + AH2 + S-adenosyl-L-methionine = (8S)-3',8-cyclo-7,8-dihydroguanosine 5'-triphosphate + 5'-deoxyadenosine + L-methionine + A + H(+). Its pathway is cofactor biosynthesis; molybdopterin biosynthesis. Its function is as follows. Catalyzes the cyclization of GTP to (8S)-3',8-cyclo-7,8-dihydroguanosine 5'-triphosphate. This is Probable GTP 3',8-cyclase from Saccharolobus islandicus (strain M.16.27) (Sulfolobus islandicus).